We begin with the raw amino-acid sequence, 167 residues long: Transcription antitermination protein NusB (167 aa).

A disordered region spans residues 1–21; the sequence is MIPTDTAPPSKPAQGHKGYKN.

This sequence belongs to the NusB family.

Its function is as follows. Involved in transcription antitermination. Required for transcription of ribosomal RNA (rRNA) genes. Binds specifically to the boxA antiterminator sequence of the ribosomal RNA (rrn) operons. This is Transcription antitermination protein NusB from Nitrosomonas eutropha (strain DSM 101675 / C91 / Nm57).